A 934-amino-acid chain; its full sequence is MAPVRGDGMRGLAVFISDIRNCKSKEAEIKRINKELANIRSKFKGDKTLDGYQKKKYVCKLLFIFLLGHDIDFGHMEAVNLLSSNKYSEKQIGYLFISVLVNTNSDLIKLIIQSIKNDLQSRNPIHVNLALQCIANIGSQDMAEAFSNEIPKLLVSGDTMDVVKQSAALCLLRLFRTCPDIIPGGEWTSRIIHLLNDQHMGVVTAATSLIDALVKKNPEEYKGCVSLAVSRLSRIVTASYTDLQDYTYYFVPAPWLSVKLLRLLQNYNPPTEDPGVRGRLNECLETILNKAQEPPKSKKVQHSNAKNAVLFEAINLIIHNDSEPSLLVRACNQLGQFLSNRETNLRYLALESMCHLATSEFSHEAVKKHQEVVILSMKMEKDVSVRQQAVDLLYAMCDRSNAEEIVQEMLNYLETADYSIREEMVLKVAILAEKYATDYTWYVDVILNLIRIAGDYVSEEVWYRVIQIVINREEVQGYAAKTVFEALQAPACHENMVKVGGYILGEFGNLIAGDSRSAPMVQFKLLHSKYHLCSSMTRALLLSTYIKFINLFPEIRGTIQDVFRQHSNLRSADAELQQRASEYLQLSIVASTDVLATVLEEMPSFPERESSILAVLKKKKPGRVPENAEIRETKSPVPNSHNNAHSNAQTNHTSSANNANASSDLLGLSTPPASQSGTLIDVLGDIYSTANGNSNVVNNSKKFVFKNNGVLFENDLLQIGVKSEFRQNLGRLGLYYGNKTQTALQNFVPTLQWSAEDALKLNVQIKAVEPTLEAGAQIQQLLTAECIDHYLGAPSIVISFRVSGGAPQKITVNLPLTINKFFEPTEMNAESFFARWRNLGGEQQRAQRVFKAQQPLDLPGARNKLTGFGMQLLDSIDPNPDNMVCAGIIHTQAHKVGCLLRLEPNKQAQMFRLTIRSSLEAVTQEICDLLVDQF.

The disordered stretch occupies residues 623 to 670; sequence RVPENAEIRETKSPVPNSHNNAHSNAQTNHTSSANNANASSDLLGLST. A compositionally biased stretch (polar residues) spans 636-645; the sequence is PVPNSHNNAH. The span at 646-663 shows a compositional bias: low complexity; the sequence is SNAQTNHTSSANNANASS.

Belongs to the adapter complexes large subunit family. Adaptor protein complex 2 (AP-2) is a heterotetramer composed of two large adaptins (alpha-type and beta-type subunits), a medium adaptin (mu-type subunit AP50) and a small adaptin (sigma-type subunit AP17).

It is found in the cell membrane. It localises to the membrane. Its subcellular location is the coated pit. In terms of biological role, adaptins are components of the adapter complexes which link clathrin to receptors in coated vesicles. Clathrin-associated protein complexes are believed to interact with the cytoplasmic tails of membrane proteins, leading to their selection and concentration. Alpha adaptin is a subunit of the plasma membrane adapter. The polypeptide is AP-2 complex subunit alpha (Anopheles gambiae (African malaria mosquito)).